The sequence spans 401 residues: Pleckstrin homology-like domain family A member 1 (401 aa).

Disordered stretches follow at residues 39–67, 190–222, and 293–401; these read IQKRREGARPVPFSERSQEDGRGPAARSS, QQQQQQQQQQQQQQQPGQGPAEPSQPSGPAVAS, and KSTR…SNSA. The 133-residue stretch at 151–283 folds into the PH domain; sequence LKEGVLEKRS…AEITLQMVQY (133 aa). Over residues 190 to 204 the composition is skewed to low complexity; that stretch reads QQQQQQQQQQQQQQQ. Over residues 308–344 the composition is skewed to pro residues; that stretch reads PSQPQPQPQLQPQPQPQPQPQPQPQSQPQPQPQPKPQ. Residues 311 to 346 are 15 X 2 AA repeats of P-Q; that stretch reads PQPQPQLQPQPQPQPQPQPQPQSQPQPQPQPKPQPQ. Residues 352–378 are compositionally biased toward basic residues; sequence PHPHPHPHSHPHSHPHPHPHPHPHQIP. Positions 352–389 are 14 X 2 AA repeats of P-H; sequence PHPHPHPHSHPHSHPHPHPHPHPHQIPHPHPQPHSQPH.

Interacts with RPL14, EIF3S7 and PABPC4. As to expression, widely expressed with highest levels in pancreas. Strongly expressed by benign melanocytic nevi, and progressively reduced expressed in primary and metastatic melanomas (at protein level).

It is found in the cytoplasm. Its subcellular location is the cytoplasmic vesicle. It localises to the nucleus. The protein resides in the nucleolus. Its function is as follows. Seems to be involved in regulation of apoptosis. May be involved in detachment-mediated programmed cell death. May mediate apoptosis during neuronal development. May be involved in regulation of anti-apoptotic effects of IGF1. May be involved in translational regulation. This is Pleckstrin homology-like domain family A member 1 (PHLDA1) from Homo sapiens (Human).